The chain runs to 354 residues: MDQQENNGFGPIFKPRGKAVTFASVVIAIISGALLVFALWESEDKDGINFVFFATALLMLSVIIGELIRRVSMLAEEIRHKQTRYQGEWRRVFRSTFAFEYGSCILAVGTTSVLFVCYALLQNYEAFFRLDYGIFFILNCFVIPQLVFIVGIREPNTVEATMLNERNNKNVADGFAWNYYFGYLKLVLPRLEAQIAKSSEFRYKITKKKLYILVPKTCYVYDNIADADPRVTWAGDLTPCKINRGGIKERIYKQAVYRVAMTDKHEYFFILEYASNLMSLYDMSLHEDAPLSRQERDDQVVLFIRKLREILEGCKECRGKCEIVPISGDEKSKIADVLVAIHNATQVESDEADL.

The next 4 helical transmembrane spans lie at 20–40 (VTFA…FALW), 48–68 (INFV…GELI), 101–121 (YGSC…YALL), and 132–152 (YGIF…IVGI). Residues Asn-178, Tyr-183, Arg-250, Ile-251, Lys-253, Glu-272, Ser-275, and Asn-276 each contribute to the 3',3'-cGAMP site.

It belongs to the STING family.

The protein resides in the membrane. In terms of biological role, facilitator of innate immune signaling that acts as a sensor of second messenger signals produced by cyclic GMP-AMP synthase-like receptors (cGLRs) and promotes the production of type I interferon. Innate immune response is triggered in response to nucleotides from viruses and bacteria delivered to the cytoplasm. Acts by binding cyclic dinucleotides: recognizes and binds cyclic 3'-3' linked cGAMP (3'-3'-cGAMP), cyclic di-AMP (3',3'-c-di-AMP) and cyclic di-GMP (3',3'-c-di-GMP) second messengers produced by cGLRs in response to nucleotides in the cytosol, such as double-stranded RNA (dsRNA). Upon binding to 3'-3'-cGAMP, 3',3'-c-di-AMP or 3',3'-c-di-GMP, oligomerizes and promotes the recruitment and subsequent activation of the transcription factor IRF3 to induce expression of type I interferon. The sequence is that of Stimulator of interferon genes protein 3 from Stylophora pistillata (Smooth cauliflower coral).